A 203-amino-acid polypeptide reads, in one-letter code: Large ribosomal subunit protein bL25 (203 aa).

The interval 182–203 is disordered; it reads EITEEPETEEKKEEGASSVSNS.

It belongs to the bacterial ribosomal protein bL25 family. CTC subfamily. Part of the 50S ribosomal subunit; part of the 5S rRNA/L5/L18/L25 subcomplex. Contacts the 5S rRNA. Binds to the 5S rRNA independently of L5 and L18.

Its function is as follows. This is one of the proteins that binds to the 5S RNA in the ribosome where it forms part of the central protuberance. The chain is Large ribosomal subunit protein bL25 from Caldicellulosiruptor saccharolyticus (strain ATCC 43494 / DSM 8903 / Tp8T 6331).